Consider the following 658-residue polypeptide: UvrABC system protein B (658 aa).

The Helicase ATP-binding domain occupies 26–414; it reads DGLRRGVKHQ…PGVVEQIIRP (389 aa). Position 39–46 (39–46) interacts with ATP; the sequence is GATGTGKT. Positions 92 to 115 match the Beta-hairpin motif; sequence YYDYYQPEAYVPQTDTYIEKDAKI. The region spanning 430–596 is the Helicase C-terminal domain; sequence QIDDLIGEIR…TVKKEIRDVI (167 aa). The UVR domain occupies 622–657; it reads EELIRTLEAEMKEAAKALDFERAAQLRDIIFELKAE.

The protein belongs to the UvrB family. As to quaternary structure, forms a heterotetramer with UvrA during the search for lesions. Interacts with UvrC in an incision complex.

The protein localises to the cytoplasm. The UvrABC repair system catalyzes the recognition and processing of DNA lesions. A damage recognition complex composed of 2 UvrA and 2 UvrB subunits scans DNA for abnormalities. Upon binding of the UvrA(2)B(2) complex to a putative damaged site, the DNA wraps around one UvrB monomer. DNA wrap is dependent on ATP binding by UvrB and probably causes local melting of the DNA helix, facilitating insertion of UvrB beta-hairpin between the DNA strands. Then UvrB probes one DNA strand for the presence of a lesion. If a lesion is found the UvrA subunits dissociate and the UvrB-DNA preincision complex is formed. This complex is subsequently bound by UvrC and the second UvrB is released. If no lesion is found, the DNA wraps around the other UvrB subunit that will check the other stand for damage. In Geobacillus kaustophilus (strain HTA426), this protein is UvrABC system protein B.